A 79-amino-acid chain; its full sequence is Pulmonary surfactant-associated protein B (79 aa).

The region spanning 4–79 (PLPFCWLCRT…VCGLVLRCSS (76 aa)) is the Saposin B-type domain. 3 disulfide bridges follow: C8/C77, C11/C71, and C35/C46.

In terms of assembly, homodimer; disulfide-linked.

The protein resides in the secreted. The protein localises to the extracellular space. Its subcellular location is the surface film. In terms of biological role, pulmonary surfactant-associated proteins promote alveolar stability by lowering the surface tension at the air-liquid interface in the peripheral air spaces. SP-B increases the collapse pressure of palmitic acid to nearly 70 millinewtons per meter. The sequence is that of Pulmonary surfactant-associated protein B (SFTPB) from Sus scrofa (Pig).